A 99-amino-acid polypeptide reads, in one-letter code: Protein adenylyltransferase MntA (99 aa).

The short motif at 33–47 is the GSX(10)DXD motif element; sequence GSYVRGEAKEDSDVD. Residues Asp-45 and Asp-47 contribute to the active site. Residues Asp-45, Asp-47, and Asp-77 each coordinate Mg(2+).

The protein belongs to the MntA antitoxin family. Mg(2+) serves as cofactor.

It catalyses the reaction L-tyrosyl-[protein] + ATP = O-(5'-adenylyl)-L-tyrosyl-[protein] + diphosphate. The enzyme catalyses O-(5'-adenylyl)-L-tyrosyl-[protein] + ATP = O-[5'-(adenylyl-(5'-&gt;3')-adenylyl)]-L-tyrosyl-[protein] + diphosphate. Functionally, antitoxin component of a type VII toxin-antitoxin (TA) system. Overexpression in E.coli neutralizes the toxic effect of cognate toxin HepT. Neutralization is mostly due to AMPylation of the toxin by this enzyme. This is Protein adenylyltransferase MntA from Thermococcus cleftensis (strain DSM 27260 / KACC 17922 / CL1).